Consider the following 100-residue polypeptide: Urease subunit gamma (100 aa).

It belongs to the urease gamma subunit family. In terms of assembly, heterotrimer of UreA (gamma), UreB (beta) and UreC (alpha) subunits. Three heterotrimers associate to form the active enzyme.

The protein localises to the cytoplasm. The catalysed reaction is urea + 2 H2O + H(+) = hydrogencarbonate + 2 NH4(+). Its pathway is nitrogen metabolism; urea degradation; CO(2) and NH(3) from urea (urease route): step 1/1. The chain is Urease subunit gamma from Micrococcus luteus (strain ATCC 4698 / DSM 20030 / JCM 1464 / CCM 169 / CCUG 5858 / IAM 1056 / NBRC 3333 / NCIMB 9278 / NCTC 2665 / VKM Ac-2230) (Micrococcus lysodeikticus).